The following is a 142-amino-acid chain: Two-component response regulator ARR22 (142 aa).

The 118-residue stretch at 23–140 folds into the Response regulatory domain; that stretch reads NVLIVDDDPL…KIFPLISHLF (118 aa). At Asp74 the chain carries 4-aspartylphosphate.

The protein belongs to the ARR family. Type-A subfamily. In terms of processing, two-component system major event consists of a His-to-Asp phosphorelay between a sensor histidine kinase (HK) and a response regulator (RR). In plants, the His-to-Asp phosphorelay involves an additional intermediate named Histidine-containing phosphotransfer protein (HPt). This multistep phosphorelay consists of a His-Asp-His-Asp sequential transfer of a phosphate group between first a His and an Asp of the HK protein, followed by the transfer to a conserved His of the HPt protein and finally the transfer to an Asp in the receiver domain of the RR protein.

The protein localises to the nucleus. Functionally, functions as a response regulator involved in His-to-Asp phosphorelay signal transduction system. Phosphorylation of the Asp residue in the receiver domain activates the ability of the protein to promote the transcription of target genes. Type-A response regulators seem to act as negative regulators of the cytokinin signaling. The chain is Two-component response regulator ARR22 (ARR22) from Arabidopsis thaliana (Mouse-ear cress).